A 382-amino-acid chain; its full sequence is MQDAAPRLTFTLRDEERLMMKIGVFVPIGNNGWLISTHAPQYMPTFELNKAIVQKAEHYHFDFALSMIKLRGFGGKTEFWDHNLESFTLMAGLAAVTSRIQIYATAATLTLPPAIVARMAATIDSISGGRFGVNLVTGWQKPEYEQMGIWPGDDYFSRRYDYLTEYVQVLRDLWGTGKSDFKGDFFTMNDCRVSPQPSVPMKVICAGQSDAGMAFSAQYADFNFCFGKGVNTPTAFAPTAVRMKQAAEQTGRDVGSYVLFMVIADETDDAARAKWEHYKAGADEEALSWLTEQSQKDTRSGTDTNVRQMADPTSAVNINMGTLVGSYASVARMLDEVASVPGAEGVLLTFDDFLSGIETFGERIQPLMQCRAHLPALTQEVA.

Residues 68-69 (IK), Asn134, Glu143, 159-160 (RY), and Ser209 each bind FMN.

Belongs to the NtaA/SnaA/DszA monooxygenase family. RutA subfamily.

It carries out the reaction uracil + FMNH2 + NADH + O2 = (Z)-3-ureidoacrylate + FMN + NAD(+) + H2O + H(+). It catalyses the reaction thymine + FMNH2 + NADH + O2 = (Z)-2-methylureidoacrylate + FMN + NAD(+) + H2O + H(+). Functionally, catalyzes the pyrimidine ring opening between N-3 and C-4 by an unusual flavin hydroperoxide-catalyzed mechanism, adding oxygen atoms in the process to yield ureidoacrylate peracid, that immediately reacts with FMN forming ureidoacrylate and FMN-N(5)-oxide. The FMN-N(5)-oxide reacts spontaneously with NADH to produce FMN. Requires the flavin reductase RutF to regenerate FMN in vivo. The protein is Pyrimidine monooxygenase RutA of Escherichia coli O8 (strain IAI1).